Consider the following 198-residue polypeptide: MAEEFLNTHNASILLSAANKSHYPQDDLPEVALAGRSNVGKSSFINTLLGRKNLARTSSKPGKTQLLNFYNIDDKLRFVDVPGYGYAKVSKTERAKWGKMIEEYLVTRDNLRVVVSLVDFRHDPSADDIQMYEFLKYYEIPVIIVATKADKIPRGKWNKHESSIKKKLNFDKKDHFIVFSSVDRTGLDESWDTILSEL.

The region spanning 27-198 (DLPEVALAGR…ESWDTILSEL (172 aa)) is the EngB-type G domain. Residues 35 to 42 (GRSNVGKS), 62 to 66 (GKTQL), 80 to 83 (DVPG), 147 to 150 (TKAD), and 179 to 181 (FSS) contribute to the GTP site. Mg(2+) is bound by residues Ser-42 and Thr-64.

This sequence belongs to the TRAFAC class TrmE-Era-EngA-EngB-Septin-like GTPase superfamily. EngB GTPase family. It depends on Mg(2+) as a cofactor.

Functionally, necessary for normal cell division and for the maintenance of normal septation. In Streptococcus agalactiae serotype Ia (strain ATCC 27591 / A909 / CDC SS700), this protein is Probable GTP-binding protein EngB.